A 143-amino-acid chain; its full sequence is Transcriptional regulator MraZ (143 aa).

SpoVT-AbrB domains lie at 5-47 (EYQH…PQEE) and 76-119 (ASEC…SKSE).

This sequence belongs to the MraZ family. As to quaternary structure, forms oligomers.

The protein localises to the cytoplasm. It localises to the nucleoid. This is Transcriptional regulator MraZ from Listeria monocytogenes serotype 4b (strain CLIP80459).